Consider the following 301-residue polypeptide: Rhodopsin (301 aa).

Topologically, residues 1–18 are extracellular; that stretch reads LHMIHLHWYQYPPMNPMM. A helical transmembrane segment spans residues 19–43; the sequence is YPLLLIFMLFTGILCLAGNFVTIWV. At 44 to 55 the chain is on the cytoplasmic side; it reads FMNTKSLRTPAN. A helical membrane pass occupies residues 56 to 78; the sequence is LLVVNLAMSDFLMMFTMFPPMMV. The Extracellular portion of the chain corresponds to 79 to 92; that stretch reads TCYYHTWTLGPTFC. A disulfide bridge links C92 with C169. A helical transmembrane segment spans residues 93–115; the sequence is QVYAFLGNLCGCASIWTMVFITF. Positions 116 to 118 match the 'Ionic lock' involved in activated form stabilization motif; it reads DRY. Residues 116–134 lie on the Cytoplasmic side of the membrane; it reads DRYNVIVKGVAGEPLSTKK. The helical transmembrane segment at 135–155 threads the bilayer; that stretch reads ASLWILSVWVLSTAWCIAPFF. The Extracellular segment spans residues 156-182; it reads GWNHYVPEGNLTGCGTDYLSEDILSRS. The N-linked (GlcNAc...) asparagine glycan is linked to N165. Residues 183 to 204 traverse the membrane as a helical segment; it reads YLYIYSTWVYFLPLAITIYCYV. The Cytoplasmic portion of the chain corresponds to 205–245; sequence FIIKAVAAHEKGMRDQAKKMGIKSLRNEEAQKTSAECRLAK. A helical transmembrane segment spans residues 246-267; it reads NAMTTVALWFIAWTPCLLINWV. The Extracellular portion of the chain corresponds to 268–278; it reads GMFARSYLSPV. Residues 279-300 form a helical membrane-spanning segment; that stretch reads YTIWGYVFAKANAVYNPIVYAI. K288 carries the N6-(retinylidene)lysine modification.

It belongs to the G-protein coupled receptor 1 family. Opsin subfamily. Homodimer. Interacts with GNAQ. In terms of processing, contains one covalently linked retinal chromophore.

The protein localises to the cell projection. It localises to the rhabdomere membrane. Its function is as follows. Photoreceptor required for image-forming vision at low light intensity. Can use both retinal and 3-dehydroretinal as visual pigment. Light-induced isomerization of 11-cis to all-trans retinal triggers a conformational change that activates signaling via G-proteins. Signaling via GNAQ probably mediates the activation of phospholipase C. The protein is Rhodopsin (RHO) of Cambarus hubrichti (Salem cave crayfish).